Here is a 127-residue protein sequence, read N- to C-terminus: Mitochondrial pyruvate carrier 2 (127 aa).

The Mitochondrial matrix segment spans residues 2–40; the sequence is AAAGARGLRATYHRLMDKVELLLPKKLRPLYNHPAGPRT. Residue lysine 26 is modified to N6-acetyllysine. The helical transmembrane segment at 41 to 61 threads the bilayer; that stretch reads VFFWAPIMKWGLVCAGLADMA. Over 62-72 the chain is Mitochondrial intermembrane; it reads RPAEKLSTAQS. The chain crosses the membrane as a helical span at residues 73–90; that stretch reads TVLMATGFIWSRYSLVII. The Mitochondrial matrix segment spans residues 91–92; it reads PK. The helical transmembrane segment at 93 to 115 threads the bilayer; that stretch reads NWSLFAVNFFVGSAGASQLFRIW. Topologically, residues 116–127 are mitochondrial intermembrane; the sequence is RYNQELKSKGIQ.

Belongs to the mitochondrial pyruvate carrier (MPC) (TC 2.A.105) family. In terms of assembly, homodimer. Homooligomer. Forms heterodimers with MPC1 and MPC1L. The heterodimer is the more stable and dominant form.

It localises to the mitochondrion inner membrane. The enzyme catalyses pyruvate(out) + H(+)(out) = pyruvate(in) + H(+)(in). In terms of biological role, mediates the uptake of pyruvate into mitochondria. The chain is Mitochondrial pyruvate carrier 2 (Mpc2) from Mus musculus (Mouse).